We begin with the raw amino-acid sequence, 318 residues long: Transaldolase (318 aa).

Lys-132 functions as the Schiff-base intermediate with substrate in the catalytic mechanism.

It belongs to the transaldolase family. Type 1 subfamily. Homodimer.

It is found in the cytoplasm. It catalyses the reaction D-sedoheptulose 7-phosphate + D-glyceraldehyde 3-phosphate = D-erythrose 4-phosphate + beta-D-fructose 6-phosphate. It participates in carbohydrate degradation; pentose phosphate pathway; D-glyceraldehyde 3-phosphate and beta-D-fructose 6-phosphate from D-ribose 5-phosphate and D-xylulose 5-phosphate (non-oxidative stage): step 2/3. Its function is as follows. Transaldolase is important for the balance of metabolites in the pentose-phosphate pathway. This Shewanella oneidensis (strain ATCC 700550 / JCM 31522 / CIP 106686 / LMG 19005 / NCIMB 14063 / MR-1) protein is Transaldolase.